Here is a 246-residue protein sequence, read N- to C-terminus: MLDLYIEEIYKRIEKIKSTQLEKIKQAAHLITESLISEDSVFHVFGCGHSHMAAEELFYRAGGLACVNAILPSELMLHEGALKSSYYERNEEIIKLIFDRYELRKGECIIIVSHSGRNGAPVEAAIDAKRRGLHVVALTSTEYKQKTFSRHSSGKFLEDVADIVIDNCGPYGDAVLTVEKEDIKISFSPLSTVLNTVILNMLEAEIITNMLEKNMSPPVFLSGNIEGAEEHNLKLIEKYKKRLRHL.

An SIS domain is found at 31-212 (ITESLISEDS…EAEIITNMLE (182 aa)).

It belongs to the UPF0309 family.

This chain is UPF0309 protein TTE0306, found in Caldanaerobacter subterraneus subsp. tengcongensis (strain DSM 15242 / JCM 11007 / NBRC 100824 / MB4) (Thermoanaerobacter tengcongensis).